The chain runs to 192 residues: Peptide deformylase (192 aa).

Fe cation-binding residues include Cys102 and His145. Glu146 is a catalytic residue. His149 is a Fe cation binding site.

This sequence belongs to the polypeptide deformylase family. Fe(2+) serves as cofactor.

It carries out the reaction N-terminal N-formyl-L-methionyl-[peptide] + H2O = N-terminal L-methionyl-[peptide] + formate. Functionally, removes the formyl group from the N-terminal Met of newly synthesized proteins. Requires at least a dipeptide for an efficient rate of reaction. N-terminal L-methionine is a prerequisite for activity but the enzyme has broad specificity at other positions. The polypeptide is Peptide deformylase (Thermus thermophilus (strain ATCC BAA-163 / DSM 7039 / HB27)).